Reading from the N-terminus, the 435-residue chain is GTPase Der (435 aa).

EngA-type G domains lie at 4-167 (PIVA…SPDA) and 175-350 (ISFS…ENKN). GTP is bound by residues 10–17 (GQPNVGKS), 57–61 (DTGGI), 119–122 (NKAD), 181–188 (GRPNVGKS), 228–232 (DTAGI), and 293–296 (NKWD). The 85-residue stretch at 351–435 (QRIQSSVLND…PIKILPRKRK (85 aa)) folds into the KH-like domain.

Belongs to the TRAFAC class TrmE-Era-EngA-EngB-Septin-like GTPase superfamily. EngA (Der) GTPase family. Associates with the 50S ribosomal subunit.

In terms of biological role, GTPase that plays an essential role in the late steps of ribosome biogenesis. The protein is GTPase Der of Lactobacillus delbrueckii subsp. bulgaricus (strain ATCC 11842 / DSM 20081 / BCRC 10696 / JCM 1002 / NBRC 13953 / NCIMB 11778 / NCTC 12712 / WDCM 00102 / Lb 14).